We begin with the raw amino-acid sequence, 207 residues long: MRFNVSFLLSLLLPTLAFAESWSIRISEDEVSRTYGYHDTVESEHTMPLLESSPKSEKNTKVTYVNRDFTRQLNPSADEQDAKALGSSIEFEVFQINETKSSHTIFESGAGICQGFHSRLGVEVTDATTYYVIPVNKEEYYTNIATATVLSNEDSKNMQYVPVFYIQNPELAKKVQDEENKKGKNLASKNIENRKTILSHVICRKVI.

The first 19 residues, 1 to 19 (MRFNVSFLLSLLLPTLAFA), serve as a signal peptide directing secretion.

The protein to P.multocida PM1509.

This is an uncharacterized protein from Pasteurella multocida (strain Pm70).